The sequence spans 428 residues: Small ribosomal subunit protein uS2m (428 aa).

A disordered region spans residues 30 to 50 (FLSQDNFTAPPPPPTNSKKQA).

It belongs to the universal ribosomal protein uS2 family. As to quaternary structure, component of the mitochondrial small ribosomal subunit (mt-SSU). Mature N.crassa 74S mitochondrial ribosomes consist of a small (37S) and a large (54S) subunit. The 37S small subunit contains a 16S ribosomal RNA (16S mt-rRNA) and 32 different proteins. The 54S large subunit contains a 23S rRNA (23S mt-rRNA) and 42 different proteins.

The protein resides in the mitochondrion. Component of the mitochondrial ribosome (mitoribosome), a dedicated translation machinery responsible for the synthesis of mitochondrial genome-encoded proteins, including at least some of the essential transmembrane subunits of the mitochondrial respiratory chain. The mitoribosomes are attached to the mitochondrial inner membrane and translation products are cotranslationally integrated into the membrane. This is Small ribosomal subunit protein uS2m (mrp4) from Neurospora crassa (strain ATCC 24698 / 74-OR23-1A / CBS 708.71 / DSM 1257 / FGSC 987).